Consider the following 548-residue polypeptide: Sesquiterpene synthase 12 (548 aa).

Mg(2+) contacts are provided by aspartate 299, aspartate 303, aspartate 444, and glutamate 452. The DDXXD motif signature appears at 299 to 303; that stretch reads DDTFD.

The protein belongs to the terpene synthase family. Tpsa subfamily. It depends on Mg(2+) as a cofactor. Requires Mn(2+) as cofactor. Mostly expressed in leaves, to a lower extent in stems, trichomes, flowers and roots and, at low levels, in fruits.

It carries out the reaction (2E,6E)-farnesyl diphosphate = alpha-humulene + diphosphate. It catalyses the reaction (2E,6E)-farnesyl diphosphate = (-)-(E)-beta-caryophyllene + diphosphate. The enzyme catalyses (2Z,6Z)-farnesyl diphosphate = beta-bisabolene + diphosphate. The catalysed reaction is (2E)-geranyl diphosphate = terpinolene + diphosphate. It carries out the reaction (2E)-geranyl diphosphate = limonene + diphosphate. It catalyses the reaction (2E)-geranyl diphosphate = beta-myrcene + diphosphate. The enzyme catalyses (2E)-geranyl diphosphate = (E)-beta-ocimene + diphosphate. The catalysed reaction is (2Z,6Z)-farnesyl diphosphate = gamma-curcumene + diphosphate. It carries out the reaction (2Z,6Z)-farnesyl diphosphate = (Z)-gamma-bisabolene + diphosphate. The protein operates within secondary metabolite biosynthesis; terpenoid biosynthesis. Sesquiterpene synthase involved in the biosynthesis of volatile compounds. Mediates the conversion of (2E,6E)-farnesyl diphosphate (FPP) into (1E,4E,8E)-alpha-humulene and (-)-(E)-beta-caryophyllene, and of (2Z,6Z)-farnesyl diphosphate ((ZZ)-FPP) into beta-bisabolene, gamma-curcumene and (Z)-gamma-bisabolene. Can act with a low efficiency as a monoterpene synthase with geranyl diphosphate (GPP) as substrate, thus producing beta-myrcene, (E)-beta-ocimene, limonene and terpinolene. This Solanum lycopersicum (Tomato) protein is Sesquiterpene synthase 12.